Consider the following 651-residue polypeptide: MSAKTYPVLKAAKAQALIDNDKYLKWYEESIEEPEKFWSKHGKRIDWFKPYTKAKNTSFKGKVPIKWFEDGLTNVSYNCIDRHLKTHGERTAIIWEGDNPYIDKRITYNQLYDNVCRLANVLKAHGVKKGDRVTIYMPMVPEATYAMLACSRIGAVHSVVFGGFSPEALAGRIVDCESTFVITCDEGVRGGKPVALKENTDVAIDIAAKQYVIVNKVLVVRRTGGKVGWAPGRDLWYHQEIAKVKPDCPPVKMKAEDPLFILYTSGSTGKPKGVLHTTGGYLVYAAMTHEYVFDYKDGEIFWCSADVGWVTGHSYIVYGPLANCATTVMFEGVPNFPDQGRFWEIIDKHKVNIFYTAPTAIRSLMGAGDDFVKRSSRSSLRLLGSVGEPINPEAWEWYYNVVGDQRCPIVDTWWQTETGGILISPLPGATDLKPGSATRPFFGVKPELVDNEGKVLEGAADGNLCLIDSWPGQARTIYGDHNRFVQTYFSTYKGKYFTGDGCRRDEDGYYWITGRVDDVLNVSGHRLGTAEVESALVSHHLVSEAAVVGYPHGIKGQGIYCYVTLMAGHEGNEELRQTLIKHVRSEIGPIASPDKVQFAPGLPKTRSGKIMRRILRKIAEDDFGALGDTSTLADPGVVDDLIANRQNKASA.

CoA contacts are provided by residues arginine 189–lysine 192, threonine 311, and asparagine 335. Residues glycine 387–proline 389, aspartate 411–threonine 416, aspartate 500, and arginine 515 each bind ATP. Serine 523 contributes to the CoA binding site. Arginine 526 contributes to the ATP binding site. Mg(2+) contacts are provided by valine 537, histidine 539, and valine 542. CoA is bound at residue arginine 584. The residue at position 609 (lysine 609) is an N6-acetyllysine.

Belongs to the ATP-dependent AMP-binding enzyme family. The cofactor is Mg(2+). Post-translationally, acetylated. Deacetylation by the SIR2-homolog deacetylase activates the enzyme.

It carries out the reaction acetate + ATP + CoA = acetyl-CoA + AMP + diphosphate. Catalyzes the conversion of acetate into acetyl-CoA (AcCoA), an essential intermediate at the junction of anabolic and catabolic pathways. AcsA undergoes a two-step reaction. In the first half reaction, AcsA combines acetate with ATP to form acetyl-adenylate (AcAMP) intermediate. In the second half reaction, it can then transfer the acetyl group from AcAMP to the sulfhydryl group of CoA, forming the product AcCoA. This chain is Acetyl-coenzyme A synthetase, found in Allorhizobium ampelinum (strain ATCC BAA-846 / DSM 112012 / S4) (Agrobacterium vitis (strain S4)).